The sequence spans 348 residues: Dihydroorotase (348 aa).

The Zn(2+) site is built by His17 and His19. Residues 19-21 and Asn45 contribute to the substrate site; that span reads HLR. Positions 103, 140, and 178 each coordinate Zn(2+). Lys103 carries the post-translational modification N6-carboxylysine. His140 contributes to the substrate binding site. Leu223 contacts substrate. Position 251 (Asp251) interacts with Zn(2+). Asp251 is a catalytic residue. Residues His255 and Ala267 each coordinate substrate.

The protein belongs to the metallo-dependent hydrolases superfamily. DHOase family. Class II DHOase subfamily. As to quaternary structure, homodimer. It depends on Zn(2+) as a cofactor.

The catalysed reaction is (S)-dihydroorotate + H2O = N-carbamoyl-L-aspartate + H(+). The protein operates within pyrimidine metabolism; UMP biosynthesis via de novo pathway; (S)-dihydroorotate from bicarbonate: step 3/3. Functionally, catalyzes the reversible cyclization of carbamoyl aspartate to dihydroorotate. In Shigella sonnei (strain Ss046), this protein is Dihydroorotase.